A 499-amino-acid polypeptide reads, in one-letter code: Glycerol kinase (499 aa).

ADP is bound at residue T12. Residues T12, T13, and S14 each contribute to the ATP site. T12 lines the sn-glycerol 3-phosphate pocket. R16 is a binding site for ADP. Sn-glycerol 3-phosphate is bound by residues R82, E83, and Y134. Glycerol-binding residues include R82, E83, and Y134. The residue at position 230 (H230) is a Phosphohistidine; by HPr. Residue D244 participates in sn-glycerol 3-phosphate binding. Residues D244 and Q245 each coordinate glycerol. The ADP site is built by T266 and G309. Positions 266, 309, 313, and 410 each coordinate ATP. ADP-binding residues include G410 and N414.

Belongs to the FGGY kinase family. As to quaternary structure, homotetramer and homodimer (in equilibrium). Post-translationally, the phosphoenolpyruvate-dependent sugar phosphotransferase system (PTS), including enzyme I, and histidine-containing protein (HPr) are required for the phosphorylation, which leads to the activation of the enzyme.

The catalysed reaction is glycerol + ATP = sn-glycerol 3-phosphate + ADP + H(+). Its pathway is polyol metabolism; glycerol degradation via glycerol kinase pathway; sn-glycerol 3-phosphate from glycerol: step 1/1. Its activity is regulated as follows. Activated by phosphorylation and inhibited by fructose 1,6-bisphosphate (FBP). Key enzyme in the regulation of glycerol uptake and metabolism. Catalyzes the phosphorylation of glycerol to yield sn-glycerol 3-phosphate. The polypeptide is Glycerol kinase (Staphylococcus haemolyticus (strain JCSC1435)).